Here is a 175-residue protein sequence, read N- to C-terminus: RNA pyrophosphohydrolase (175 aa).

One can recognise a Nudix hydrolase domain in the interval 6–149; it reads GYRPNVGIVI…KRDVYRRVMK (144 aa). The Nudix box motif lies at 38-59; the sequence is GGINAGETAEQAMYRELFEEVG.

Belongs to the Nudix hydrolase family. RppH subfamily. A divalent metal cation is required as a cofactor.

Its function is as follows. Accelerates the degradation of transcripts by removing pyrophosphate from the 5'-end of triphosphorylated RNA, leading to a more labile monophosphorylated state that can stimulate subsequent ribonuclease cleavage. This Sodalis glossinidius (strain morsitans) protein is RNA pyrophosphohydrolase.